The chain runs to 241 residues: Small ribosomal subunit protein uS2 (241 aa).

This sequence belongs to the universal ribosomal protein uS2 family.

This is Small ribosomal subunit protein uS2 from Erwinia tasmaniensis (strain DSM 17950 / CFBP 7177 / CIP 109463 / NCPPB 4357 / Et1/99).